The primary structure comprises 262 residues: Ribosomal RNA small subunit methyltransferase A (262 aa).

Positions 19, 21, 44, 65, 90, and 109 each coordinate S-adenosyl-L-methionine. The tract at residues 218 to 246 (LPNNLPGPLRERAEEALAGLGHGPDARAE) is disordered.

Belongs to the class I-like SAM-binding methyltransferase superfamily. rRNA adenine N(6)-methyltransferase family. RsmA subfamily.

It localises to the cytoplasm. It catalyses the reaction adenosine(1518)/adenosine(1519) in 16S rRNA + 4 S-adenosyl-L-methionine = N(6)-dimethyladenosine(1518)/N(6)-dimethyladenosine(1519) in 16S rRNA + 4 S-adenosyl-L-homocysteine + 4 H(+). In terms of biological role, specifically dimethylates two adjacent adenosines (A1518 and A1519) in the loop of a conserved hairpin near the 3'-end of 16S rRNA in the 30S particle. May play a critical role in biogenesis of 30S subunits. The polypeptide is Ribosomal RNA small subunit methyltransferase A (Rubrobacter xylanophilus (strain DSM 9941 / JCM 11954 / NBRC 16129 / PRD-1)).